Here is an 895-residue protein sequence, read N- to C-terminus: MNISVIGTGYVGLIQAVGLAEFGFDVVGIDIDESKVKALNRGECPLYEEGLEGLLKKHVNKNLTFTTSYKPIKDSDVIFLCVGTPQDKDGNADLRFLFSAVEKIKETIDKEDYKVIVIKSTVPVGTNRRVKELLKDYNVDVVSNPEFLREGIAVYDFFNPERVILGFENLNNKKPIEIMEEVYKYFKDKNIPFVITNWETAELIKYASNAFLATKISFINELAKLSDKVKADIKTISYAMGLDPRIGNKFLNAGIGYGGSCFHPDEVLFIDRGRGLECITFKELFELEDKDNVKILSFDGEKLSLKKLKLASKRYYNDDLITLRFNLGREIKITKDHPVVILEDGELKIKLTSDVKEGDKVILPYGNFGEEREIEIDILEELSKTDLIEKVWIHNKDLATNEFNIIKPYLSNKYPHDVKRNGTIRAKDILPIKEILDKYGSKNRLFTAKSKSTTIPYKIKIDKDFARLIGYYLSEGWISKDYGRNGVVRKRIGLCFGIHEEEYINDVKNILNKLGIKYIEKIKDGSHSILISSKILAYVFENILNCGINCYNKNIPPQMFNAKEEIKWEFLKGLFRGDGGIVRLNNNKNLNIEFATVSKKMAHSLLILLQLLGIVASVKKCYNNKSTTMAYIIRINGLEQVKKIGELFGKKWENYKDIAESYKRNIEPLGYKKSDNFAILEVKEIIKEHYSGYVYSVETENSLLITSYGILIHNCFPKDVKALIKQFENNNIEPILIKATDIVNEEQIKWFFEKIKNYYGNLNGKTFAVLGLAFKPNTDDLRESRAIKLIDMLLESGAIVKGFDYVEKARENTINMYKLDKSKGFYGYNLYVLDDLYETVKNVDGIIITVEYDFNKEDWEKIGNLVKEKVVFDGRNILDVEKIKKLGFKYYGVGR.

2 to 19 (NISVIGTGYVGLIQAVGL) contributes to the NAD(+) binding site. The active site involves cysteine 261. Positions 468-614 (LIGYYLSEGW…LLILLQLLGI (147 aa)) constitute a DOD-type homing endonuclease domain.

Belongs to the UDP-glucose/GDP-mannose dehydrogenase family. Post-translationally, this protein undergoes a protein self splicing that involves a post-translational excision of the intervening region (intein) followed by peptide ligation.

This is an uncharacterized protein from Methanocaldococcus jannaschii (strain ATCC 43067 / DSM 2661 / JAL-1 / JCM 10045 / NBRC 100440) (Methanococcus jannaschii).